The primary structure comprises 374 residues: Peptide chain release factor 2 (374 aa).

An N5-methylglutamine modification is found at Gln-252.

This sequence belongs to the prokaryotic/mitochondrial release factor family. Methylated by PrmC. Methylation increases the termination efficiency of RF2.

It is found in the cytoplasm. Peptide chain release factor 2 directs the termination of translation in response to the peptide chain termination codons UGA and UAA. This chain is Peptide chain release factor 2, found in Xanthomonas euvesicatoria pv. vesicatoria (strain 85-10) (Xanthomonas campestris pv. vesicatoria).